The sequence spans 215 residues: NAD(P)H-hydrate epimerase (215 aa).

Residues 10 to 211 (AQRYDAHATN…DIGIYAQDRV (202 aa)) enclose the YjeF N-terminal domain. 58 to 62 (NNGGD) contributes to the (6S)-NADPHX binding site. Asn59 and Asp121 together coordinate K(+). Residues 125-131 (GVGLTRD) and Asp154 contribute to the (6S)-NADPHX site. Ser157 provides a ligand contact to K(+).

The protein belongs to the NnrE/AIBP family. It depends on K(+) as a cofactor.

It carries out the reaction (6R)-NADHX = (6S)-NADHX. It catalyses the reaction (6R)-NADPHX = (6S)-NADPHX. In terms of biological role, catalyzes the epimerization of the S- and R-forms of NAD(P)HX, a damaged form of NAD(P)H that is a result of enzymatic or heat-dependent hydration. This is a prerequisite for the S-specific NAD(P)H-hydrate dehydratase to allow the repair of both epimers of NAD(P)HX. The chain is NAD(P)H-hydrate epimerase from Levilactobacillus brevis (strain ATCC 367 / BCRC 12310 / CIP 105137 / JCM 1170 / LMG 11437 / NCIMB 947 / NCTC 947) (Lactobacillus brevis).